The chain runs to 453 residues: Flap endonuclease 1 (453 aa).

Residues 1–105 (MGIKGLTGLL…SVLAKRFARR (105 aa)) form an N-domain region. Aspartate 34 contributes to the Mg(2+) binding site. Arginine 47 and arginine 71 together coordinate DNA. 5 residues coordinate Mg(2+): aspartate 87, glutamate 159, glutamate 161, aspartate 180, and aspartate 182. Residues 123–254 (DVDKLARRQV…KTALKLMREH (132 aa)) form an I-domain region. Glutamate 159 is a DNA binding site. The DNA site is built by glycine 232 and aspartate 234. A Mg(2+)-binding site is contributed by aspartate 234. Disordered stretches follow at residues 273 to 336 (EEIK…VASS) and 409 to 453 (RLDG…KSKN). The segment covering 320-333 (KSPKKKAPAKKKKV) has biased composition (basic residues). The interval 406–414 (QQGRLDGFF) is interaction with PCNA. A compositionally biased stretch (basic and acidic residues) spans 417-446 (KPKEPAAKDTGKGKGKATKGEKRKAEEKGS).

This sequence belongs to the XPG/RAD2 endonuclease family. FEN1 subfamily. Interacts with PCNA. Three molecules of FEN1 bind to one PCNA trimer with each molecule binding to one PCNA monomer. PCNA stimulates the nuclease activity without altering cleavage specificity. Requires Mg(2+) as cofactor. Phosphorylated. Phosphorylation upon DNA damage induces relocalization to the nuclear plasma.

The protein resides in the nucleus. Its subcellular location is the nucleolus. It is found in the nucleoplasm. It localises to the mitochondrion. Its function is as follows. Structure-specific nuclease with 5'-flap endonuclease and 5'-3' exonuclease activities involved in DNA replication and repair. During DNA replication, cleaves the 5'-overhanging flap structure that is generated by displacement synthesis when DNA polymerase encounters the 5'-end of a downstream Okazaki fragment. It enters the flap from the 5'-end and then tracks to cleave the flap base, leaving a nick for ligation. Also involved in the long patch base excision repair (LP-BER) pathway, by cleaving within the apurinic/apyrimidinic (AP) site-terminated flap. Acts as a genome stabilization factor that prevents flaps from equilibrating into structures that lead to duplications and deletions. Also possesses 5'-3' exonuclease activity on nicked or gapped double-stranded DNA, and exhibits RNase H activity. Also involved in replication and repair of rDNA and in repairing mitochondrial DNA. The sequence is that of Flap endonuclease 1 from Cryptococcus neoformans var. neoformans serotype D (strain B-3501A) (Filobasidiella neoformans).